The primary structure comprises 387 residues: S-adenosylmethionine synthase (387 aa).

H17 lines the ATP pocket. D19 lines the Mg(2+) pocket. Residue E45 participates in K(+) binding. L-methionine is bound by residues E58 and Q101. The flexible loop stretch occupies residues 101–111; it reads QSADIAMGVDA. ATP contacts are provided by residues 166–168, 231–232, D240, 246–247, A263, and K267; these read DAK, RF, and RK. An L-methionine-binding site is contributed by D240. Residue K271 participates in L-methionine binding.

It belongs to the AdoMet synthase family. As to quaternary structure, homotetramer; dimer of dimers. Mg(2+) is required as a cofactor. K(+) serves as cofactor.

It localises to the cytoplasm. The enzyme catalyses L-methionine + ATP + H2O = S-adenosyl-L-methionine + phosphate + diphosphate. The protein operates within amino-acid biosynthesis; S-adenosyl-L-methionine biosynthesis; S-adenosyl-L-methionine from L-methionine: step 1/1. In terms of biological role, catalyzes the formation of S-adenosylmethionine (AdoMet) from methionine and ATP. The overall synthetic reaction is composed of two sequential steps, AdoMet formation and the subsequent tripolyphosphate hydrolysis which occurs prior to release of AdoMet from the enzyme. The sequence is that of S-adenosylmethionine synthase from Rhodospirillum centenum (strain ATCC 51521 / SW).